The following is a 660-amino-acid chain: MVVLISSTVTICNVKPKLEDGNFRVSRLIHRPEVPFFSGLSNEKKKKCAVSVMCLAVKKEQVVQSVESVNGTIFPKKSKNLIMSEGRDEDEDYGKIICPGCGIFMQDNDPDLPGYYQKRKVIANNLEGDEHVENDELAGFEMVDDDADEEEEGEDDEMDDEIKNAIEGSNSESESGFEWESDEWEEKKEVNDVELDGFAPAGVGYGNVTEEKEKKKRVSKTERKKIAREEAKKDNYDDVTVCARCHSLRNYGQVKNQAAENLLPDFDFDRLISTRLIKPMSNSSTTVVVMVVDCVDFDGSFPKRAAKSLFQVLQKAENDPKGSKNLPKLVLVATKVDLLPTQISPARLDRWVRHRAKAGGAPKLSGVYMVSARKDIGVKNLLAYIKELAGPRGNVWVIGAQNAGKSTLINALSKKDGAKVTRLTEAPVPGTTLGILKIGGILSAKAKMYDTPGLLHPYLMSLRLNSEERKMVEIRKEVQPRSYRVKAGQSVHIGGLVRLDLVSASVETIYITIWASHSVSLHLGKTENAEEIFKGHSGLRLQPPIGENRASELGTWEEKEIQVSGNSWDVKSIDISVAGLGWLSLGLKGAATLALWTYQGIDVTLREPLVIDRAPYLERPGFWLPKAITEVLGTHSSKLVDARRRKKQQDSTDFLSDSVA.

The transit peptide at 1–53 (MVVLISSTVTICNVKPKLEDGNFRVSRLIHRPEVPFFSGLSNEKKKKCAVSVM) directs the protein to the chloroplast. Disordered stretches follow at residues 127 to 158 (EGDE…DDEM) and 191 to 212 (NDVE…TEEK). Positions 130-158 (EHVENDELAGFEMVDDDADEEEEGEDDEM) are enriched in acidic residues. In terms of domain architecture, CP-type G spans 273–457 (STRLIKPMSN…MYDTPGLLHP (185 aa)).

Belongs to the TRAFAC class YlqF/YawG GTPase family. As to quaternary structure, binds to chloroplast 16S and 23S ribosomal RNAs. As to expression, mostly expressed in stems, petioles, leaves and flowers and, at low levels, also in roots.

Its subcellular location is the plastid. The protein localises to the chloroplast stroma. Its function is as follows. Required for brassinosteroid- (BR) mediated post-transcriptional and translational regulation in the chloroplast, including accumulation of chloroplast rRNA. Involved in chloroplast differentiation. The polypeptide is GTP-binding protein BRASSINAZOLE INSENSITIVE PALE GREEN 2, chloroplastic (Arabidopsis thaliana (Mouse-ear cress)).